A 299-amino-acid chain; its full sequence is Protein NSG2 (299 aa).

The Cytoplasmic portion of the chain corresponds to 1–108; the sequence is MANRGEPDPK…PSRTRQTRQN (108 aa). Serine 90 is subject to Phosphoserine. The chain crosses the membrane as a helical span at residues 109 to 129; it reads ILHYLQAVLILSLSGFAYHEL. At 130-161 the chain is on the lumenal side; sequence SRNLHDNHLLHPDFASRPLLLGVKLCNWLSNG. The helical transmembrane segment at 162–182 threads the bilayer; it reads VLPNWLGYGVEGLLFGSVVPI. The Cytoplasmic portion of the chain corresponds to 183–237; that stretch reads LDNIFQTEVVKSSVHHDSLTSVIRSINAMLGVTFGIRKIQWNSSLQAAGAWGLLN. Residues 238–258 traverse the membrane as a helical segment; that stretch reads IILWLFFDGSISMLMSCICIG. Topologically, residues 259-268 are lumenal; it reads VGCCISCYKD. A helical membrane pass occupies residues 269 to 289; that stretch reads IIDGSQFLYFMDFYFLGSLMF. The Cytoplasmic portion of the chain corresponds to 290 to 299; that stretch reads GKLGRYLYSH.

Belongs to the INSIG family.

The protein localises to the endoplasmic reticulum membrane. Its function is as follows. Stabilizes the HMG-CoA reductase HMG2 by preventing its HRD1-dependent degradation. Binds directly to the sterol-sensing domain (SSD)-containing transmembrane region of HMG2, promoting its folding to protect it from degradation. The protein is Protein NSG2 (NSG2) of Saccharomyces cerevisiae (strain ATCC 204508 / S288c) (Baker's yeast).